The following is an 83-amino-acid chain: MKGMIMLISCLMLIDVVVESKNGYIIEPKGCKYSCFWGSSTWCNRECKFKKGSSGYCAWPACWCYGLPDNVKIFDYYNNKCGK.

The first 20 residues, 1–20, serve as a signal peptide directing secretion; that stretch reads MKGMIMLISCLMLIDVVVES. The LCN-type CS-alpha/beta domain maps to 21–82; the sequence is KNGYIIEPKG…IFDYYNNKCG (62 aa). Cystine bridges form between Cys-31–Cys-81, Cys-35–Cys-57, Cys-43–Cys-62, and Cys-47–Cys-64. Cys-81 is modified (cysteine amide).

In terms of tissue distribution, expressed by the venom gland.

The protein localises to the secreted. Inhibits the sodium (Nav) currents in an apparent irreversible manner. Produces small depolarization and induces repetitive firing in squid axons. Is specific for arthropods (crickets, triatomides, crabs and squids), but is non-toxic to mice. Shows antibacterial activity against both Gram-positive and Gram-negative bacteria. The polypeptide is Ardiscretin (Tityus discrepans (Venezuelan scorpion)).